The chain runs to 1382 residues: Histone-lysine N-methyltransferase SUVR5 (1382 aa).

Disordered regions lie at residues 43–62 (TVTG…SEPK) and 354–373 (GNTN…NTPE). 3 C2H2-type zinc fingers span residues 735-758 (FACA…EERH), 769-792 (LQCI…QAVH), and 838-861 (FVCK…QAEH). The tract at residues 915-935 (RRMQGSKSLGTEGNTEAGVSP) is disordered. Polar residues predominate over residues 919 to 928 (GSKSLGTEGN). Positions 1145–1221 (LRCSCRSSVC…TCQNRVLQNG (77 aa)) constitute a Pre-SET domain. Zn(2+) is bound by residues cysteine 1147, cysteine 1149, cysteine 1154, cysteine 1159, cysteine 1182, cysteine 1203, cysteine 1207, cysteine 1209, and cysteine 1213. An SET domain is found at 1224 to 1356 (AKLEVFRTES…AGEEITRDYG (133 aa)). S-adenosyl-L-methionine contacts are provided by residues 1234–1236 (KGW), tyrosine 1277, and 1313–1314 (NH). Cysteine 1316 is a binding site for Zn(2+). S-adenosyl-L-methionine is bound at residue tyrosine 1355. One can recognise a Post-SET domain in the interval 1366–1382 (NEHPCHCKATNCRGLLS). Zn(2+) is bound by residues cysteine 1370, cysteine 1372, and cysteine 1377.

This sequence belongs to the class V-like SAM-binding methyltransferase superfamily. In terms of assembly, component of a regulatory complex with LDL1/SWP1. Interacts with LDL1/SWP1.

It is found in the nucleus. Its subcellular location is the chromosome. It catalyses the reaction L-lysyl-[histone] + S-adenosyl-L-methionine = N(6)-methyl-L-lysyl-[histone] + S-adenosyl-L-homocysteine + H(+). Histone methyltransferase that functions together with its binding partner LDL1/SWP1 as one of the regulators of flower timing in Arabidopsis. Mediates H3K9me2 deposition and regulates gene expression in a DNA methylation-independent manner. Binds DNA through its zinc fingers and represses the expression of a subset of stimulus response genes. May represent a novel mechanism for plants to regulate their chromatin and transcriptional state, which may allow for the adaptability and modulation necessary to rapidly respond to environment or developmental cues. In Arabidopsis thaliana (Mouse-ear cress), this protein is Histone-lysine N-methyltransferase SUVR5.